We begin with the raw amino-acid sequence, 527 residues long: MASREKTSIEGHMFDVVVIGGGISGLSAAKLLAEHEVDVLVLEARDRVGGRTYTVRNEHVDYVDVGGAYVGPTQNRILRLSKELGLETYKVNVNERLVQYVKGKTYPFRGAFPPVWNPIAYLDYNNLWRTMDNMGKEIPADAPWEAPHAEEWDKMTMKDLIDKICWTKTARRFASLFVNINVTSEPHEVSALWFLWYVKQCGGTTRIFSVTNGGQERKFVGGSGQVSERIMERLGDRVKLKRPVTYVDQSDDNIIIETLNHELYECKYVISAIPPTLTAKIHFRPELPSERNQLIQRLPMGAIIKCMMYYKEAFWKKKDYCGCMIIEDEEAPISITLDDTKPDGSLPAIMGFILARKADRLAKLHKEIRKRKICELYAKVLGSQEALQPVHYEEKNWCEEQYSGGCYTAYFPPGIMTHYGRVIRQPFGRIYFAGTETATHWSGYMEGAVEAGERTAREVLNALGRVAEKDLKTQEPESKDVPAMEITHTFWERNLPSVTGLLKLIGFTTSVTALWIVAYKFRLLRRS.

N-acetylmethionine is present on Met1. The Cytoplasmic segment spans residues 1–497 (MASREKTSIE…HTFWERNLPS (497 aa)). At Ser383 the chain carries Phosphoserine. Cys406 is subject to S-8alpha-FAD cysteine. Residues 498 to 518 (VTGLLKLIGFTTSVTALWIVA) traverse the membrane as a helical; Anchor for type IV membrane protein segment. Over 519–527 (YKFRLLRRS) the chain is Mitochondrial intermembrane. Residues 520 to 522 (KFR) are interaction with membrane phospholipid headgroups.

Belongs to the flavin monoamine oxidase family. Monomer, homo- or heterodimer (containing two subunits of similar size). Each subunit contains a covalently bound flavin. Enzymatically active as monomer. It depends on FAD as a cofactor.

Its subcellular location is the mitochondrion outer membrane. It carries out the reaction a secondary aliphatic amine + O2 + H2O = a primary amine + an aldehyde + H2O2. The catalysed reaction is a primary methyl amine + O2 + H2O = an aldehyde + H2O2 + NH4(+). It catalyses the reaction (R)-adrenaline + O2 + H2O = (R)-3,4-dihydroxymandelaldehyde + methylamine + H2O2. The enzyme catalyses dopamine + O2 + H2O = 3,4-dihydroxyphenylacetaldehyde + H2O2 + NH4(+). It carries out the reaction tyramine + O2 + H2O = (4-hydroxyphenyl)acetaldehyde + H2O2 + NH4(+). The catalysed reaction is (R)-noradrenaline + O2 + H2O = (R)-3,4-dihydroxymandelaldehyde + H2O2 + NH4(+). It catalyses the reaction serotonin + O2 + H2O = (5-hydroxyindol-3-yl)acetaldehyde + H2O2 + NH4(+). The enzyme catalyses kynuramine + O2 + H2O = 3-(2-aminophenyl)-3-oxopropanal + H2O2 + NH4(+). It carries out the reaction tryptamine + O2 + H2O = indole-3-acetaldehyde + H2O2 + NH4(+). The catalysed reaction is 2-phenylethylamine + O2 + H2O = 2-phenylacetaldehyde + H2O2 + NH4(+). Catalyzes the oxidative deamination of primary and some secondary amine such as neurotransmitters, with concomitant reduction of oxygen to hydrogen peroxide and has important functions in the metabolism of neuroactive and vasoactive amines in the central nervous system and peripheral tissues. Preferentially oxidizes serotonin. Also catalyzes the oxidative deamination of kynuramine to 3-(2-aminophenyl)-3-oxopropanal that can spontaneously condense to 4-hydroxyquinoline. In Canis lupus familiaris (Dog), this protein is Amine oxidase [flavin-containing] A.